The sequence spans 376 residues: N-acetyldiaminopimelate deacetylase (376 aa).

D69 is an active-site residue. E128 (proton acceptor) is an active-site residue.

This sequence belongs to the peptidase M20A family. N-acetyldiaminopimelate deacetylase subfamily.

It carries out the reaction N-acetyl-(2S,6S)-2,6-diaminopimelate + H2O = (2S,6S)-2,6-diaminopimelate + acetate. It participates in amino-acid biosynthesis; L-lysine biosynthesis via DAP pathway; LL-2,6-diaminopimelate from (S)-tetrahydrodipicolinate (acetylase route): step 3/3. Functionally, catalyzes the conversion of N-acetyl-diaminopimelate to diaminopimelate and acetate. The sequence is that of N-acetyldiaminopimelate deacetylase from Bacillus cereus (strain 03BB102).